A 195-amino-acid polypeptide reads, in one-letter code: Peptidyl-tRNA hydrolase (195 aa).

Tyr-17 contacts tRNA. His-22 (proton acceptor) is an active-site residue. Positions 68, 70, and 116 each coordinate tRNA.

The protein belongs to the PTH family. Monomer.

It is found in the cytoplasm. It catalyses the reaction an N-acyl-L-alpha-aminoacyl-tRNA + H2O = an N-acyl-L-amino acid + a tRNA + H(+). In terms of biological role, hydrolyzes ribosome-free peptidyl-tRNAs (with 1 or more amino acids incorporated), which drop off the ribosome during protein synthesis, or as a result of ribosome stalling. Its function is as follows. Catalyzes the release of premature peptidyl moieties from peptidyl-tRNA molecules trapped in stalled 50S ribosomal subunits, and thus maintains levels of free tRNAs and 50S ribosomes. The sequence is that of Peptidyl-tRNA hydrolase from Shewanella sp. (strain MR-4).